The primary structure comprises 483 residues: (R)-mandelonitrile beta-glucosyltransferase (483 aa).

Histidine 22 acts as the Proton acceptor in catalysis. An anthocyanidin is bound at residue histidine 22. Aspartate 124 (charge relay) is an active-site residue. Residues threonine 146, glutamine 363, histidine 378, tryptophan 381, asparagine 382, serine 383, and glutamate 386 each coordinate UDP-alpha-D-glucose. Alanine 401 serves as a coordination point for an anthocyanidin. UDP-alpha-D-glucose contacts are provided by glutamate 402 and glutamine 403.

Belongs to the UDP-glycosyltransferase family.

The enzyme catalyses (R)-mandelonitrile + UDP-alpha-D-glucose = (R)-prunasin + UDP + H(+). Its function is as follows. Involved in the biosynthesis of the cyanogenic glycoside (R)-prunasin, a precursor of (R)-amygdalin, which at high concentrations is associated with intense bitterness in kernels of almond. Stereo-selectively glucosylates (R)-mandelonitrile to produce (R)-prunasin. The protein is (R)-mandelonitrile beta-glucosyltransferase of Prunus dulcis (Almond).